Consider the following 593-residue polypeptide: Methionine--tRNA ligase, mitochondrial (593 aa).

The transit peptide at 1–29 (MLRVSAFRLLGRRGASRVSLLEDFSFRYY) directs the protein to the mitochondrion. The 'HIGH' region motif lies at 52-62 (FYVNAAPHIGH). The 'KMSKS' region motif lies at 347-351 (KMSKS). An ATP-binding site is contributed by K350.

The protein belongs to the class-I aminoacyl-tRNA synthetase family.

Its subcellular location is the mitochondrion matrix. It carries out the reaction tRNA(Met) + L-methionine + ATP = L-methionyl-tRNA(Met) + AMP + diphosphate. This Bos taurus (Bovine) protein is Methionine--tRNA ligase, mitochondrial (MARS2).